Reading from the N-terminus, the 197-residue chain is Small ribosomal subunit protein uS10c (197 aa).

Residues 1–60 (MATSSLSTIVFSPLALSNSSSFPNKPQVSNLSLHSSLSNLRRTLSHSSPSSSSSSNVRVF) constitute a chloroplast transit peptide. A disordered region spans residues 67–91 (ESQETGPESYVEEGSETSALGIGAD).

This sequence belongs to the universal ribosomal protein uS10 family. As to quaternary structure, part of the 30S ribosomal subunit.

The protein resides in the plastid. The protein localises to the chloroplast. This Mesembryanthemum crystallinum (Common ice plant) protein is Small ribosomal subunit protein uS10c (RPS10).